The primary structure comprises 469 residues: Adenosylhomocysteinase (469 aa).

Positions 63, 139, and 164 each coordinate substrate. Position 165–167 (165–167 (TTT)) interacts with NAD(+). Substrate is bound by residues Lys194 and Asp198. Residues Asn199, 228–233 (GYGDVG), Glu251, Asn300, 321–323 (IGH), and Asn375 contribute to the NAD(+) site.

It belongs to the adenosylhomocysteinase family. The cofactor is NAD(+).

Its subcellular location is the cytoplasm. It carries out the reaction S-adenosyl-L-homocysteine + H2O = L-homocysteine + adenosine. Its pathway is amino-acid biosynthesis; L-homocysteine biosynthesis; L-homocysteine from S-adenosyl-L-homocysteine: step 1/1. In terms of biological role, may play a key role in the regulation of the intracellular concentration of adenosylhomocysteine. The polypeptide is Adenosylhomocysteinase (Pseudomonas syringae pv. syringae (strain B728a)).